The following is a 296-amino-acid chain: Phosphoribosylaminoimidazole-succinocarboxamide synthase (296 aa).

Belongs to the SAICAR synthetase family.

It carries out the reaction 5-amino-1-(5-phospho-D-ribosyl)imidazole-4-carboxylate + L-aspartate + ATP = (2S)-2-[5-amino-1-(5-phospho-beta-D-ribosyl)imidazole-4-carboxamido]succinate + ADP + phosphate + 2 H(+). The protein operates within purine metabolism; IMP biosynthesis via de novo pathway; 5-amino-1-(5-phospho-D-ribosyl)imidazole-4-carboxamide from 5-amino-1-(5-phospho-D-ribosyl)imidazole-4-carboxylate: step 1/2. In Pelobacter propionicus (strain DSM 2379 / NBRC 103807 / OttBd1), this protein is Phosphoribosylaminoimidazole-succinocarboxamide synthase.